A 203-amino-acid polypeptide reads, in one-letter code: Holliday junction branch migration complex subunit RuvA (203 aa).

Residues 1-64 (MIGRLRGIIL…EDAQLLYGFN (64 aa)) form a domain I region. Residues 65–142 (NKQERTLFKE…KGLHGDLFTP (78 aa)) are domain II. The flexible linker stretch occupies residues 143–154 (AVDLVLTSPASP). The interval 155-203 (TSEDAEQEAVAALVALGYKPQEASRMVSKIARPDASSETLIRDALRAAL) is domain III.

It belongs to the RuvA family. As to quaternary structure, homotetramer. Forms an RuvA(8)-RuvB(12)-Holliday junction (HJ) complex. HJ DNA is sandwiched between 2 RuvA tetramers; dsDNA enters through RuvA and exits via RuvB. An RuvB hexamer assembles on each DNA strand where it exits the tetramer. Each RuvB hexamer is contacted by two RuvA subunits (via domain III) on 2 adjacent RuvB subunits; this complex drives branch migration. In the full resolvosome a probable DNA-RuvA(4)-RuvB(12)-RuvC(2) complex forms which resolves the HJ.

It localises to the cytoplasm. In terms of biological role, the RuvA-RuvB-RuvC complex processes Holliday junction (HJ) DNA during genetic recombination and DNA repair, while the RuvA-RuvB complex plays an important role in the rescue of blocked DNA replication forks via replication fork reversal (RFR). RuvA specifically binds to HJ cruciform DNA, conferring on it an open structure. The RuvB hexamer acts as an ATP-dependent pump, pulling dsDNA into and through the RuvAB complex. HJ branch migration allows RuvC to scan DNA until it finds its consensus sequence, where it cleaves and resolves the cruciform DNA. This is Holliday junction branch migration complex subunit RuvA from Salmonella agona (strain SL483).